The primary structure comprises 205 residues: Thiamine-phosphate synthase (205 aa).

Residues 35–39 and N67 each bind 4-amino-2-methyl-5-(diphosphooxymethyl)pyrimidine; that span reads QYRDK. Mg(2+) contacts are provided by D68 and D86. 4-amino-2-methyl-5-(diphosphooxymethyl)pyrimidine is bound at residue T105. Residue 132-134 coordinates 2-[(2R,5Z)-2-carboxy-4-methylthiazol-5(2H)-ylidene]ethyl phosphate; sequence SQT. K135 contacts 4-amino-2-methyl-5-(diphosphooxymethyl)pyrimidine. G162 provides a ligand contact to 2-[(2R,5Z)-2-carboxy-4-methylthiazol-5(2H)-ylidene]ethyl phosphate.

It belongs to the thiamine-phosphate synthase family. Mg(2+) is required as a cofactor.

The enzyme catalyses 2-[(2R,5Z)-2-carboxy-4-methylthiazol-5(2H)-ylidene]ethyl phosphate + 4-amino-2-methyl-5-(diphosphooxymethyl)pyrimidine + 2 H(+) = thiamine phosphate + CO2 + diphosphate. The catalysed reaction is 2-(2-carboxy-4-methylthiazol-5-yl)ethyl phosphate + 4-amino-2-methyl-5-(diphosphooxymethyl)pyrimidine + 2 H(+) = thiamine phosphate + CO2 + diphosphate. It carries out the reaction 4-methyl-5-(2-phosphooxyethyl)-thiazole + 4-amino-2-methyl-5-(diphosphooxymethyl)pyrimidine + H(+) = thiamine phosphate + diphosphate. It functions in the pathway cofactor biosynthesis; thiamine diphosphate biosynthesis; thiamine phosphate from 4-amino-2-methyl-5-diphosphomethylpyrimidine and 4-methyl-5-(2-phosphoethyl)-thiazole: step 1/1. Condenses 4-methyl-5-(beta-hydroxyethyl)thiazole monophosphate (THZ-P) and 2-methyl-4-amino-5-hydroxymethyl pyrimidine pyrophosphate (HMP-PP) to form thiamine monophosphate (TMP). This chain is Thiamine-phosphate synthase, found in Pseudomonas syringae pv. tomato (strain ATCC BAA-871 / DC3000).